A 744-amino-acid polypeptide reads, in one-letter code: 1,4-alpha-glucan branching enzyme GlgB (744 aa).

The disordered stretch occupies residues 1 to 23 (MSGPEDPADRRHGEVPAPRRDIP). The span at 7–23 (PADRRHGEVPAPRRDIP) shows a compositional bias: basic and acidic residues. The Nucleophile role is filled by aspartate 424. The active-site Proton donor is the glutamate 476.

It belongs to the glycosyl hydrolase 13 family. GlgB subfamily. In terms of assembly, monomer.

The catalysed reaction is Transfers a segment of a (1-&gt;4)-alpha-D-glucan chain to a primary hydroxy group in a similar glucan chain.. Its pathway is glycan biosynthesis; glycogen biosynthesis. Functionally, catalyzes the formation of the alpha-1,6-glucosidic linkages in glycogen by scission of a 1,4-alpha-linked oligosaccharide from growing alpha-1,4-glucan chains and the subsequent attachment of the oligosaccharide to the alpha-1,6 position. This is 1,4-alpha-glucan branching enzyme GlgB from Nocardia farcinica (strain IFM 10152).